The sequence spans 210 residues: Uracil phosphoribosyltransferase (210 aa).

Residues Arg77, Arg102, and 129–137 contribute to the 5-phospho-alpha-D-ribose 1-diphosphate site; that span reads DPMLATGAS. Uracil-binding positions include Ile195 and 200 to 202; that span reads GDA. Asp201 lines the 5-phospho-alpha-D-ribose 1-diphosphate pocket.

Belongs to the UPRTase family. It depends on Mg(2+) as a cofactor.

It carries out the reaction UMP + diphosphate = 5-phospho-alpha-D-ribose 1-diphosphate + uracil. Its pathway is pyrimidine metabolism; UMP biosynthesis via salvage pathway; UMP from uracil: step 1/1. Its activity is regulated as follows. Allosterically activated by GTP. In terms of biological role, catalyzes the conversion of uracil and 5-phospho-alpha-D-ribose 1-diphosphate (PRPP) to UMP and diphosphate. This chain is Uracil phosphoribosyltransferase, found in Mycoplasmoides gallisepticum (strain R(low / passage 15 / clone 2)) (Mycoplasma gallisepticum).